A 412-amino-acid chain; its full sequence is MSESDETKSISSLISSSSSSRPKKYICTYEGCDKAYNRPSLLEQHLRTHSNDRPYKCTVEDCDKAFFRKSHLETHIVSHSEKKPFHCSVCGKGVNSRQHLKRHEITHTKSFKCTFENCQEAFYKHQSLRHHILSVHEKTLTCKQCNKVFTRPSKLAQHKLKHHGGSPAYQCDHPGCFKNFQTWSVLQFHIKQSHPKLKCPKCGKGCVGKKGLSSHMLSHDDSTMIKIWTCDYCDVGKFAKKNELVEHYNIFHDGNIPDDLLKETEVKKLENLLDQGSKLNNLHELETEKLKVEEDEEDEEDSLDEKRSDVRSDSMSAQRSIKSFTASLEGSKSVSKLISNSGKKINCPKNNCDRMFSREYDLRRHLKWHDDNLQRIESFLNSIEKEETPEGEPLVKKARMDLLPNETSVISR.

Positions 1 to 20 are disordered; that stretch reads MSESDETKSISSLISSSSSS. Over residues 9 to 20 the composition is skewed to low complexity; it reads SISSLISSSSSS. 7 C2H2-type zinc fingers span residues 25-49, 55-79, 85-107, 111-136, 140-162, 169-194, and 197-219; these read YICTYEGCDKAYNRPSLLEQHLRTH, YKCTVEDCDKAFFRKSHLETHIVSH, FHCSVCGKGVNSRQHLKRHEITH, FKCTFENCQEAFYKHQSLRHHILSVH, LTCKQCNKVFTRPSKLAQHKLKH, YQCDHPGCFKNFQTWSVLQFHIKQSH, and LKCPKCGKGCVGKKGLSSHMLSH. Residues 228 to 252 form a C2H2-type 8; degenerate zinc finger; that stretch reads WTCDYCDVGKFAKKNELVEHYNIFH. Residues 285-316 form a disordered region; the sequence is LETEKLKVEEDEEDEEDSLDEKRSDVRSDSMS. Positions 293 to 303 are enriched in acidic residues; the sequence is EEDEEDEEDSL. The segment at 345-369 adopts a C2H2-type 9 zinc-finger fold; that stretch reads INCPKNNCDRMFSREYDLRRHLKWH.

It localises to the nucleus. Functionally, transcription factor required for transcription of 5S rRNA by RNA polymerase III. The protein is Transcription factor IIIA (PZF1) of Candida albicans (strain SC5314 / ATCC MYA-2876) (Yeast).